We begin with the raw amino-acid sequence, 463 residues long: Argininosuccinate lyase (463 aa).

Belongs to the lyase 1 family. Argininosuccinate lyase subfamily.

The protein localises to the cytoplasm. It catalyses the reaction 2-(N(omega)-L-arginino)succinate = fumarate + L-arginine. It participates in amino-acid biosynthesis; L-arginine biosynthesis; L-arginine from L-ornithine and carbamoyl phosphate: step 3/3. The chain is Argininosuccinate lyase from Thermosynechococcus vestitus (strain NIES-2133 / IAM M-273 / BP-1).